We begin with the raw amino-acid sequence, 591 residues long: Probable metalloprotease ARX1 (591 aa).

The protein belongs to the peptidase M24 family. In terms of assembly, component of the nucleoplasmic and cytoplasmic pre-60S ribosomal particles.

It localises to the cytoplasm. The protein localises to the nucleus. In terms of biological role, probable metalloprotease involved in proper assembly of pre-ribosomal particles during the biogenesis of the 60S ribosomal subunit. Accompanies the pre-60S particles to the cytoplasm. The chain is Probable metalloprotease ARX1 (ARX1) from Eremothecium gossypii (strain ATCC 10895 / CBS 109.51 / FGSC 9923 / NRRL Y-1056) (Yeast).